The sequence spans 331 residues: UPF0329 protein ECU01_0080/ECU01_1530/ECU02_1560/ECU04_0090/ECU08_0010/ECU08_2090 (331 aa).

Basic and acidic residues predominate over residues 305–320 (QRSEMEKRDREQDPER). The tract at residues 305 to 331 (QRSEMEKRDREQDPERRRLRARRVGSL) is disordered. Positions 321–331 (RRLRARRVGSL) are enriched in basic residues.

This sequence belongs to the UPF0329 family.

The sequence is that of UPF0329 protein ECU01_0080/ECU01_1530/ECU02_1560/ECU04_0090/ECU08_0010/ECU08_2090 from Encephalitozoon cuniculi (strain GB-M1) (Microsporidian parasite).